We begin with the raw amino-acid sequence, 364 residues long: Anthranilate N-methyltransferase (364 aa).

A disordered region spans residues 1-20; that stretch reads MGSLSESHTQYKHGVEVEED. S-adenosyl-L-methionine contacts are provided by G209, D232, M253, and K266. Residue H270 is the Proton acceptor of the active site.

This sequence belongs to the class I-like SAM-binding methyltransferase superfamily. Cation-independent O-methyltransferase family. COMT subfamily. Homodimer. Expressed in leaves, flowers, stems and roots. Detected in the vascular tissues in stems, in the rhizodermis or the endodermis of roots, in the inside of carpels, in the central vascular bundles of the syncarp ovary and in the secretory oil glands located around the outer ovary wall.

The enzyme catalyses anthranilate + S-adenosyl-L-methionine = N-methylanthranilate + S-adenosyl-L-homocysteine + H(+). With respect to regulation, inhibited by Ca(2+), Co(2+), Fe(2+), Fe(3+), Cu(2+) or Zn(2+). No effect of Mg(2+). In terms of biological role, involved in the biosynthesis of acridine alkaloids. N-methyltransferase with a strict substrate specificity for anthranilate. No activity with anthranilic acid methyl ester, anthraniloyl CoA, 3- or 4-amino-benzoic acid, salicylic acid, catechol, eugenol, caffeic acid, quercetin, theobromin, theophyllin, putrescine and nicotinic acid among others. The chain is Anthranilate N-methyltransferase from Ruta graveolens (Common rue).